A 219-amino-acid polypeptide reads, in one-letter code: Protein-L-isoaspartate O-methyltransferase 1 (219 aa).

Residue Ser-67 is part of the active site.

It belongs to the methyltransferase superfamily. L-isoaspartyl/D-aspartyl protein methyltransferase family.

The protein localises to the cytoplasm. It carries out the reaction [protein]-L-isoaspartate + S-adenosyl-L-methionine = [protein]-L-isoaspartate alpha-methyl ester + S-adenosyl-L-homocysteine. Functionally, catalyzes the methyl esterification of L-isoaspartyl residues in peptides and proteins that result from spontaneous decomposition of normal L-aspartyl and L-asparaginyl residues. It plays a role in the repair and/or degradation of damaged proteins. The sequence is that of Protein-L-isoaspartate O-methyltransferase 1 from Geotalea uraniireducens (strain Rf4) (Geobacter uraniireducens).